The sequence spans 505 residues: ATP synthase subunit beta, mitochondrial (505 aa).

The N-terminal 31 residues, 1–31 (MFALRAASKADKNLLPFLGQLSRSHAAKAAK), are a transit peptide targeting the mitochondrion. 183–190 (GGAGVGKT) serves as a coordination point for ATP.

Belongs to the ATPase alpha/beta chains family. As to quaternary structure, F-type ATPases have 2 components, CF(1) - the catalytic core - and CF(0) - the membrane proton channel. CF(1) has five subunits: alpha(3), beta(3), gamma(1), delta(1), epsilon(1). CF(0) has three main subunits: a, b and c.

The protein localises to the mitochondrion. Its subcellular location is the mitochondrion inner membrane. It carries out the reaction ATP + H2O + 4 H(+)(in) = ADP + phosphate + 5 H(+)(out). Functionally, mitochondrial membrane ATP synthase (F(1)F(0) ATP synthase or Complex V) produces ATP from ADP in the presence of a proton gradient across the membrane which is generated by electron transport complexes of the respiratory chain. F-type ATPases consist of two structural domains, F(1) - containing the extramembraneous catalytic core, and F(0) - containing the membrane proton channel, linked together by a central stalk and a peripheral stalk. During catalysis, ATP synthesis in the catalytic domain of F(1) is coupled via a rotary mechanism of the central stalk subunits to proton translocation. Subunits alpha and beta form the catalytic core in F(1). Rotation of the central stalk against the surrounding alpha(3)beta(3) subunits leads to hydrolysis of ATP in three separate catalytic sites on the beta subunits. This chain is ATP synthase subunit beta, mitochondrial, found in Drosophila melanogaster (Fruit fly).